The primary structure comprises 177 residues: Secretion monitor (177 aa).

A signal peptide spans 1-30; it reads MIGILNRWRQFGRRYFWPHLLLGMVAASLG.

It belongs to the SecM family.

The protein localises to the cytoplasm. It localises to the cytosol. The protein resides in the periplasm. Regulates secA expression by translational coupling of the secM secA operon. Translational pausing at a specific Pro residue 5 residues before the end of the protein may allow disruption of a mRNA repressor helix that normally suppresses secA translation initiation. The sequence is that of Secretion monitor from Yersinia enterocolitica serotype O:8 / biotype 1B (strain NCTC 13174 / 8081).